The primary structure comprises 222 residues: MGAPSPDQDIAAIRRNYQRASLRRVDLDADPVEQFRRWLQQAIAADLQESTAMVLSTFDGKRPSSRTVLLKAFDKRGFVFFTNYGSRKAQDISAHPNVSLLFPWYDLERQVAIMGPAERISRAESQAYFSSRPFGSRLGVWVSQQSQVISSRQILKMKWQEMNRRFANGEVPLPEFWGGFRVVPTEFEFWQGRENRLNDRFRYRPQQDSHHAQTWRIERLAP.

Substrate-binding positions include 14 to 17 (RRNY) and K71. FMN contacts are provided by residues 66 to 71 (RTVLLK), 81 to 82 (FT), R87, K88, and Q110. Residues Y128, R132, and S136 each contribute to the substrate site. FMN is bound by residues 145–146 (QS) and W190. Substrate is bound at residue 196–198 (RLN). Residue R200 participates in FMN binding.

Belongs to the pyridoxamine 5'-phosphate oxidase family. As to quaternary structure, homodimer. It depends on FMN as a cofactor.

The enzyme catalyses pyridoxamine 5'-phosphate + O2 + H2O = pyridoxal 5'-phosphate + H2O2 + NH4(+). The catalysed reaction is pyridoxine 5'-phosphate + O2 = pyridoxal 5'-phosphate + H2O2. It functions in the pathway cofactor metabolism; pyridoxal 5'-phosphate salvage; pyridoxal 5'-phosphate from pyridoxamine 5'-phosphate: step 1/1. Its pathway is cofactor metabolism; pyridoxal 5'-phosphate salvage; pyridoxal 5'-phosphate from pyridoxine 5'-phosphate: step 1/1. Functionally, catalyzes the oxidation of either pyridoxine 5'-phosphate (PNP) or pyridoxamine 5'-phosphate (PMP) into pyridoxal 5'-phosphate (PLP). This is Pyridoxine/pyridoxamine 5'-phosphate oxidase from Prochlorococcus marinus (strain MIT 9303).